We begin with the raw amino-acid sequence, 228 residues long: DNA repair protein RecO (228 aa).

It belongs to the RecO family.

Involved in DNA repair and RecF pathway recombination. The chain is DNA repair protein RecO from Mannheimia succiniciproducens (strain KCTC 0769BP / MBEL55E).